The primary structure comprises 314 residues: MNQTFVKSVTEQLPQLGLLQDEPMKKHTTFRIGGPADYYAEPDMSRISKLIEMAKACDMPVTVIGNGSNLLVGDKGIRGLVIGIGKGLSEIEVTEAVAQDFTAQDNCHIITAGAGAILAAVAAKAAEASLSGLEFASGIPGSVGGAVVMNAGAYGGEIKDVLIDATVLTADGELKTVTRDELDLSYRHSIVPEKGYIVLSARFRLTPKPKDEIKSYMAELRAKRVEKQPLEYPSAGSTFKRPEGYFAGKLIMDAGLRGYSVGDAQVSEKHCGFVVNKGEAAAADVLTLIKDVQETVLKQFGVKLEPEVKMIGEF.

The FAD-binding PCMH-type domain maps to 31-208 (RIGGPADYYA…LSARFRLTPK (178 aa)). Residue R187 is part of the active site. The Proton donor role is filled by S237. Residue E307 is part of the active site.

This sequence belongs to the MurB family. FAD is required as a cofactor.

The protein resides in the cytoplasm. The catalysed reaction is UDP-N-acetyl-alpha-D-muramate + NADP(+) = UDP-N-acetyl-3-O-(1-carboxyvinyl)-alpha-D-glucosamine + NADPH + H(+). It participates in cell wall biogenesis; peptidoglycan biosynthesis. Cell wall formation. This is UDP-N-acetylenolpyruvoylglucosamine reductase from Agathobacter rectalis (strain ATCC 33656 / DSM 3377 / JCM 17463 / KCTC 5835 / VPI 0990) (Eubacterium rectale).